A 484-amino-acid polypeptide reads, in one-letter code: 6-phosphogluconate dehydrogenase, decarboxylating (484 aa).

Residues 11–16, 34–36, 76–78, and Asn104 each bind NADP(+); these read GLAVMG, NRT, and VRA. Substrate is bound by residues Asn104 and 130–132; that span reads SGG. The active-site Proton acceptor is the Lys185. 188–189 contacts substrate; the sequence is HN. The Proton donor role is filled by Glu192. Residues Tyr193, Lys262, Arg289, Arg447, and His453 each contribute to the substrate site.

Belongs to the 6-phosphogluconate dehydrogenase family. As to quaternary structure, homodimer.

The catalysed reaction is 6-phospho-D-gluconate + NADP(+) = D-ribulose 5-phosphate + CO2 + NADPH. The protein operates within carbohydrate degradation; pentose phosphate pathway; D-ribulose 5-phosphate from D-glucose 6-phosphate (oxidative stage): step 3/3. Catalyzes the oxidative decarboxylation of 6-phosphogluconate to ribulose 5-phosphate and CO(2), with concomitant reduction of NADP to NADPH. The polypeptide is 6-phosphogluconate dehydrogenase, decarboxylating (gnd) (Haemophilus ducreyi (strain 35000HP / ATCC 700724)).